The sequence spans 572 residues: uncharacterized protein (572 aa).

A disordered region spans residues 553-572; it reads PSPAPKPVTVRKKKGNSPIS. Residues 561 to 572 show a composition bias toward basic residues; that stretch reads TVRKKKGNSPIS.

This is an uncharacterized protein from Homo sapiens (Human).